We begin with the raw amino-acid sequence, 1002 residues long: DNA-directed RNA polymerase 1, mitochondrial (1002 aa).

The N-terminal 21 residues, 1–21 (MWRYISKQAYSRKFRNSHDSA), are a transit peptide targeting the mitochondrion. Active-site residues include D703, K778, and D935.

This sequence belongs to the phage and mitochondrial RNA polymerase family. The highest levels of expression are detected in the mature leaves. The level of expression is lowest in the cotyledons.

The protein resides in the mitochondrion. It carries out the reaction RNA(n) + a ribonucleoside 5'-triphosphate = RNA(n+1) + diphosphate. In terms of biological role, DNA-dependent RNA polymerase catalyzes the transcription of DNA into RNA using the four ribonucleoside triphosphates as substrates. This Nicotiana sylvestris (Wood tobacco) protein is DNA-directed RNA polymerase 1, mitochondrial (RPOT1).